A 2036-amino-acid polypeptide reads, in one-letter code: Transmembrane channel-like protein (2036 aa).

Disordered stretches follow at residues 1 to 178 (MQND…IDDE) and 194 to 243 (SVRG…ESTQ). At 1–353 (MQNDEEPAAA…GVASYFTFLR (353 aa)) the chain is on the cytoplasmic side. The span at 58–73 (VGSSSSNGNTSNVATG) shows a compositional bias: low complexity. Residues 74–90 (ANSENNSGVTSPHQLSV) show a composition bias toward polar residues. The segment covering 125–134 (ASQEDHRSYE) has biased composition (basic and acidic residues). The segment covering 166–178 (FDEDGGGGDIDDE) has biased composition (acidic residues). Residues 198–208 (YRGKRGSRSSR) are compositionally biased toward basic residues. The span at 216-225 (HVLDSVERRR) shows a compositional bias: basic and acidic residues. Residues 227 to 243 (SVYTTSSEEGTNQESTQ) are compositionally biased toward polar residues. The chain crosses the membrane as a helical span at residues 354 to 374 (WLMWVNIMIAIPLVAFVIGPE). At 375 to 395 (YFATKHGETDPRKRMSDPEAR) the chain is on the extracellular side. Residues 396–418 (VAGNLFTFWEFEGYLKYSPMFYG) traverse the membrane as a helical segment. At 419–432 (YYSSTSGISTSGYK) the chain is on the cytoplasmic side. A helical transmembrane segment spans residues 433-453 (LPLAYFLTAVLVYIYSFVATL). At 454–526 (RKMAENSRNS…NRNWRVILQR (73 aa)) the chain is on the extracellular side. The helical transmembrane segment at 527 to 547 (ILVNILVMGLLGLSGATVVLL) threads the bilayer. Residues 548 to 567 (VNHSEDLAKHDNWLSRNAVN) are Cytoplasmic-facing. Residues 568-588 (VTMTLLSFFLPMIFEALGLFE) form a helical membrane-spanning segment. The Extracellular segment spans residues 589-599 (NWHPRQQLRLQ). Residues 600–620 (LARIMILNMLNLYSLMFSFIY) form a helical membrane-spanning segment. At 621-1308 (KINSKEKPLQ…ILTLINNQGQ (688 aa)) the chain is on the cytoplasmic side. 5 disordered regions span residues 789 to 839 (TTAT…TEAT), 860 to 967 (KPLG…TDQA), 996 to 1027 (FFTS…NATP), 1066 to 1143 (LRGR…EGSE), and 1186 to 1205 (GSTT…KQLT). Polar residues predominate over residues 870 to 885 (IPNSTTNSATLSTIPA). A compositionally biased stretch (low complexity) spans 886 to 906 (TLNTTNLPLNSTTKLTTTTST). Positions 933–952 (TSDAPDNNSYSDITDYSSEP) are enriched in polar residues. Residues 953–967 (SEIEDFDEQESTDQA) are compositionally biased toward acidic residues. Composition is skewed to low complexity over residues 1069-1083 (RITT…STTT), 1091-1100 (RTTTTELTST), and 1107-1130 (TTES…SSST). Residues 1309–1329 (VWMGIFFSPGLVLINLVKLMI) traverse the membrane as a helical segment. Residues 1330-1358 (MMYFRSWIVLTCNVPHEVVFKASKSNNFY) are Extracellular-facing. A helical membrane pass occupies residues 1359-1379 (LSLLLTMLFLCVLPVGYAIVW). The Cytoplasmic portion of the chain corresponds to 1380-1423 (LRPSWHCGPFSEYNRIAEFITNTTRNALPKQLHEPLDYLTSSST). A helical transmembrane segment spans residues 1424-1444 (VIPLLLLLILIIYYLVSLTGA). Over 1445–2036 (LREANQDLRT…RIDIENEHEK (592 aa)) the chain is Extracellular. Disordered regions lie at residues 1527 to 1572 (LRKG…SRLQ), 1592 to 1841 (ERAR…SRQG), and 1859 to 1990 (KKDD…IPTI). Composition is skewed to basic and acidic residues over residues 1538–1566 (SFVR…DKRF), 1614–1640 (KETH…DKKD), 1658–1668 (SPKDNEHDPDT), 1727–1743 (HIVD…EDKP), and 1777–1793 (PEPE…ERSS). Positions 1806–1838 (NEPSGTEEQDRSLPSPTPSQGQGHHQRQLSVLS) are enriched in polar residues. Residues 1890–1899 (VLSSVSSSTA) are compositionally biased toward low complexity. Pro residues predominate over residues 1903 to 1914 (PPTPEPESPTPS). Positions 1976 to 1990 (QDSQSSIWSDNIPTI) are enriched in polar residues.

It belongs to the TMC family. In terms of tissue distribution, expressed in multi-dendritic neurons of the labellum (md-L), which extend elaborate dendritic arbors innervating the bases of taste hairs (at protein level). In larvae, expressed in class I and class II dendritic arborization (da) neurons and bipolar dendrite (bd) neurons (at protein level). In adults, expressed in various sensory neurons including those in the mouth parts, olfactory neurons in the antenna, wing bristle neurons, haltere neurons, arista neurons, and many other sensory neurons, including a subset of chordotonal (Cho) neurons. Expressed in md-L axon terminals, including those that project into the subesophageal zone (SEZ). Also expressed in a small number of local neurons in the adult ventral nerve cord (VNC), and projections extending from a few neurons in the legs or wing hinges. In the adult mouth, expressed in a few multi-dendritic neurons of the ventral cibarial sensory organ (VCSO); the multiple elaborate dendritic branches form a brush-like structure that faces the luminal side of the food-passing tunnel. Also expressed in the oviduct and uterus of adult females.

The protein resides in the cell membrane. It is found in the cell projection. The protein localises to the dendrite. In terms of biological role, probable ion channel. Component of mechanosensitive neurons that participates in proprioception, sensing food texture, and directing egg-laying site selection (oviposition). Component of multi-dendritic neurons of the labellum (md-L) where it is required for sensing the hardness and viscosity of their food, enabling them to behaviorally discriminate their preferred softness and smoothness from harder and stickier food options. Required as part of oviposition site selection process to relay mechanosensory and chemosensory information on the hardness and sweetness of potential egg-laying substrates, thus ensuring females select the most optimal site for their eggs survival. Females determine the softest substrate for their eggs first by making a coarse evaluation of substrate hardness using mechanosensitive channels nan and Piezo in the leg tarsal bristles, followed by a much finer assessment using nan, iav and Tmc mechanosensitive channels on the labellum. This protein is required to sense subtle differences in substrate stiffness (between 0.25% and 0.3% agarose), likely acting in the md-L neurons. Also required in neurons on the labellum, including the md-Ls, and possibly in the brain, to inhibit discrimination of egg-laying substrates of different hardness if the substrate contains sucrose. During oviposition evaluation, activation of sweet neurons by sucrose enhances the activity of the Tmc neurons resulting in females losing their softness preference in favor of egg-laying sites that contain sucrose. Acts in the larvae peripheral sensory neurons, to contribute to proprioception and sensory feedback for normal forward crawling behavior. Required for the normal activity of the proprioceptive sensory dendrites, ddaE which show preferential responses to forward locomotion, and ddaD which show preferential responses to backward locomotion. This is Transmembrane channel-like protein from Drosophila melanogaster (Fruit fly).